Reading from the N-terminus, the 253-residue chain is 2-C-methyl-D-erythritol 4-phosphate cytidylyltransferase (253 aa).

It belongs to the IspD/TarI cytidylyltransferase family. IspD subfamily.

It carries out the reaction 2-C-methyl-D-erythritol 4-phosphate + CTP + H(+) = 4-CDP-2-C-methyl-D-erythritol + diphosphate. Its pathway is isoprenoid biosynthesis; isopentenyl diphosphate biosynthesis via DXP pathway; isopentenyl diphosphate from 1-deoxy-D-xylulose 5-phosphate: step 2/6. In terms of biological role, catalyzes the formation of 4-diphosphocytidyl-2-C-methyl-D-erythritol from CTP and 2-C-methyl-D-erythritol 4-phosphate (MEP). The sequence is that of 2-C-methyl-D-erythritol 4-phosphate cytidylyltransferase from Chlorobium chlorochromatii (strain CaD3).